The chain runs to 875 residues: Neurotrypsin (875 aa).

An N-terminal signal peptide occupies residues 1–20 (MTLARFVLALMLGALPEVVG). Asn26 carries N-linked (GlcNAc...) asparagine glycosylation. The interval 29–88 (LHHSHRHSPPPGPHYPYYLPTQQRPPRTRPPPPLPRFPRPPRALPAQRPHALQAGHTPRP) is disordered. The segment covering 43 to 53 (YPYYLPTQQRP) has biased composition (low complexity). A compositionally biased stretch (pro residues) spans 56-71 (TRPPPPLPRFPRPPRA). Residues 93–165 (CPAGEPWVSV…GKVDWGYCDC (73 aa)) enclose the Kringle domain. 20 cysteine pairs are disulfide-bonded: Cys93/Cys165, Cys109/Cys149, Cys138/Cys163, Cys195/Cys259, Cys208/Cys269, Cys239/Cys249, Cys305/Cys369, Cys318/Cys379, Cys349/Cys359, Cys412/Cys475, Cys425/Cys485, Cys455/Cys465, Cys525/Cys589, Cys538/Cys599, Cys569/Cys579, Cys619/Cys750, Cys661/Cys677, Cys765/Cys831, Cys794/Cys808, and Cys821/Cys850. 4 consecutive SRCR domains span residues 170 to 271 (VRLR…TCSF), 280 to 381 (IRLA…SCTP), 387 to 487 (IRLA…ACYP), and 500 to 601 (VRLV…ICDY). Residues 619-630 (CGLRLLHRRQKR) form a zymogen activation region region. The Peptidase S1 domain maps to 631-874 (IIGGKNSLRG…FVPWIKSVTK (244 aa)). His676 acts as the Charge relay system in catalysis. N-linked (GlcNAc...) asparagine glycosylation occurs at Asn683. Asp726 (charge relay system) is an active-site residue. The active-site Charge relay system is the Ser825.

Belongs to the peptidase S1 family.

Its subcellular location is the secreted. Plays a role in neuronal plasticity and the proteolytic action may subserve structural reorganizations associated with learning and memory operations. In Pan troglodytes (Chimpanzee), this protein is Neurotrypsin (PRSS12).